Consider the following 641-residue polypeptide: 1-deoxy-D-xylulose-5-phosphate synthase (641 aa).

Thiamine diphosphate contacts are provided by residues histidine 79 and 120-122 (AHS). Residue aspartate 151 participates in Mg(2+) binding. Residues 152–153 (GA), asparagine 180, tyrosine 290, and glutamate 372 each bind thiamine diphosphate. Residue asparagine 180 participates in Mg(2+) binding.

The protein belongs to the transketolase family. DXPS subfamily. Homodimer. It depends on Mg(2+) as a cofactor. Thiamine diphosphate serves as cofactor.

It catalyses the reaction D-glyceraldehyde 3-phosphate + pyruvate + H(+) = 1-deoxy-D-xylulose 5-phosphate + CO2. Its pathway is metabolic intermediate biosynthesis; 1-deoxy-D-xylulose 5-phosphate biosynthesis; 1-deoxy-D-xylulose 5-phosphate from D-glyceraldehyde 3-phosphate and pyruvate: step 1/1. Catalyzes the acyloin condensation reaction between C atoms 2 and 3 of pyruvate and glyceraldehyde 3-phosphate to yield 1-deoxy-D-xylulose-5-phosphate (DXP). This chain is 1-deoxy-D-xylulose-5-phosphate synthase, found in Bradyrhizobium sp. (strain BTAi1 / ATCC BAA-1182).